A 641-amino-acid chain; its full sequence is Calpain-6 (641 aa).

The Calpain catalytic domain maps to 26 to 343 (LFCDPTFLPE…FHKLNVCRNV (318 aa)). Residues 344 to 495 (NNPVFGRKEL…IFSEVPVQLR (152 aa)) are domain III. Residues 498-621 (TLDMPKMSCW…YLRKKGGPTA (124 aa)) enclose the C2 domain.

This sequence belongs to the peptidase C2 family. Interacts (via domain III) with microtubules. Interacts (via domain II) with ARHGEF2 (via the N-terminal zinc finger).

The protein resides in the cytoplasm. Its subcellular location is the perinuclear region. It localises to the cytoskeleton. It is found in the spindle. Its function is as follows. Microtubule-stabilizing protein that may be involved in the regulation of microtubule dynamics and cytoskeletal organization. May act as a regulator of RAC1 activity through interaction with ARHGEF2 to control lamellipodial formation and cell mobility. Does not seem to have protease activity as it has lost the active site residues. The polypeptide is Calpain-6 (Capn6) (Rattus norvegicus (Rat)).